A 314-amino-acid polypeptide reads, in one-letter code: Prohormone-3 (314 aa).

The first 19 residues, 1–19, serve as a signal peptide directing secretion; the sequence is MGRVLLSASSLLLHIQVFT. Residues 90–112 form a helical membrane-spanning segment; it reads YTCVALTVVALVSTMHFGVEAWG.

Its subcellular location is the membrane. This chain is Prohormone-3, found in Apis mellifera (Honeybee).